Consider the following 181-residue polypeptide: Shikimate kinase (181 aa).

17–22 is an ATP binding site; sequence GAGKTT. A Mg(2+)-binding site is contributed by Thr21. Substrate contacts are provided by Asp39, Arg63, and Gly85. Arg122 is an ATP binding site. Arg141 is a binding site for substrate.

Belongs to the shikimate kinase family. In terms of assembly, monomer. It depends on Mg(2+) as a cofactor.

It localises to the cytoplasm. The enzyme catalyses shikimate + ATP = 3-phosphoshikimate + ADP + H(+). It participates in metabolic intermediate biosynthesis; chorismate biosynthesis; chorismate from D-erythrose 4-phosphate and phosphoenolpyruvate: step 5/7. Functionally, catalyzes the specific phosphorylation of the 3-hydroxyl group of shikimic acid using ATP as a cosubstrate. This chain is Shikimate kinase, found in Nostoc sp. (strain PCC 7120 / SAG 25.82 / UTEX 2576).